The following is a 228-amino-acid chain: Enolase-phosphatase E1 (228 aa).

This sequence belongs to the HAD-like hydrolase superfamily. MasA/MtnC family. In terms of assembly, monomer. The cofactor is Mg(2+).

It catalyses the reaction 5-methylsulfanyl-2,3-dioxopentyl phosphate + H2O = 1,2-dihydroxy-5-(methylsulfanyl)pent-1-en-3-one + phosphate. It functions in the pathway amino-acid biosynthesis; L-methionine biosynthesis via salvage pathway; L-methionine from S-methyl-5-thio-alpha-D-ribose 1-phosphate: step 3/6. Its pathway is amino-acid biosynthesis; L-methionine biosynthesis via salvage pathway; L-methionine from S-methyl-5-thio-alpha-D-ribose 1-phosphate: step 4/6. Functionally, bifunctional enzyme that catalyzes the enolization of 2,3-diketo-5-methylthiopentyl-1-phosphate (DK-MTP-1-P) into the intermediate 2-hydroxy-3-keto-5-methylthiopentenyl-1-phosphate (HK-MTPenyl-1-P), which is then dephosphorylated to form the acireductone 1,2-dihydroxy-3-keto-5-methylthiopentene (DHK-MTPene). In Picosynechococcus sp. (strain ATCC 27264 / PCC 7002 / PR-6) (Agmenellum quadruplicatum), this protein is Enolase-phosphatase E1.